Consider the following 475-residue polypeptide: Protein EARLY HEADING DATE 2 (475 aa).

The segment covering 1-16 has biased composition (polar residues); that stretch reads MLLSDLSSDQEATGSN. Positions 1-26 are disordered; the sequence is MLLSDLSSDQEATGSNSHGGGGGDRM. 2 consecutive C2H2-type zinc fingers follow at residues 105-127 and 155-185; these read FVCE…RRGH and YVCP…SRKH. Short sequence motifs (nuclear localization signal) lie at residues 123–130 and 177–184; these read HRRGHNLP and IKKHFSRK. Residues 190–213 form a C2H2-type 2; degenerate zinc finger; that stretch reads WRCERCGKRYAVHSDWKAHVKNCG. 8 residues coordinate Zn(2+): Cys-192, Cys-195, His-208, Cys-212, Cys-219, Cys-221, His-234, and Cys-238. The CCHC-type 2; atypical zinc finger occupies 217-240; the sequence is YRCDCGILFSRKDSLLTHRAFCDA. The segment at 227–239 is SHR-binding; the sequence is RKDSLLTHRAFCD.

As to expression, mostly expressed in developing leaves (more in sheaths than in blades, especially in the outer epidermal cell of immature leaves and in the region immediately beneath the meristem where internodes are visible) and panicles, and, at very low levels, around the shoot apex and in roots.

Its subcellular location is the nucleus. Functionally, transcription activator that acts as a flowering master switch in both long and short days, independently of the circadian clock. Promotes flowering upstream of HD1 by up-regulating FTL1, FTL4, FTL5, FTL6, EHD1, HD3A and RFT1. Seems to repress FTL11 expression. May recognize the consensus motif 5'-TTTGTCGTAAT-3' in target gene promoters. This is Protein EARLY HEADING DATE 2 from Oryza sativa subsp. japonica (Rice).